A 458-amino-acid polypeptide reads, in one-letter code: MATESPATRRVQVAEHPRLLKLKEMFNSKFGSIPKFYVRAPGRVNIIGEHIDYCGYSVLPMAVEQDVLIAVEPVKTYALQLANTNPLYPDFSTSANNIQIDKTKPLWHNYFLCGLKGIQEHFGLSNLTGMNCLVDGNIPPSSGLSSSSALVCCAGLVTLTVLGRNLSKVELAEICAKSERYIGTEGGGMDQSISFLAEEGTAKLIEFSPLRATDVKLPSGAVFVIANSCVEMNKAATSHFNIRVMECRLAAKLLAKYKSLQWDKVLRLEEVQAKLGISLEEMLLVTEDALHPEPYNPEEICRCLGISLEELRTQILSPNTQDVLIFKLYQRAKHVYSEAARVLQFKKICEEAPENMVQLLGELMNQSHMSCRDMYECSCPELDQLVDICRKFGAQGSRLTGAGWGGCTVSMVPADKLPSFLANVHKAYYQRSDGSLAPEKQSLFATKPGGGALVLLEA.

Alpha-D-galactose is bound by residues arginine 43, glutamate 49, histidine 50, and aspartate 52. Positions 143, 145, and 146 each coordinate ATP. Aspartate 190 serves as a coordination point for alpha-D-galactose. Catalysis depends on aspartate 190, which acts as the Proton acceptor. The ATP site is built by asparagine 233 and lysine 234.

Belongs to the GHMP kinase family. GalK subfamily. As to quaternary structure, monomer.

It catalyses the reaction N-acetyl-alpha-D-galactosamine + ATP = N-acetyl-alpha-D-galactosamine 1-phosphate + ADP + H(+). In terms of biological role, acts on GalNAc. Also acts as a galactokinase when galactose is present at high concentrations. May be involved in a salvage pathway for the reutilization of free GalNAc derived from the degradation of complex carbohydrates. The sequence is that of N-acetylgalactosamine kinase (GALK2) from Homo sapiens (Human).